We begin with the raw amino-acid sequence, 475 residues long: ATP synthase subunit beta, chloroplastic (475 aa).

156–163 (GGAGVGKT) lines the ATP pocket.

The protein belongs to the ATPase alpha/beta chains family. In terms of assembly, F-type ATPases have 2 components, CF(1) - the catalytic core - and CF(0) - the membrane proton channel. CF(1) has five subunits: alpha(3), beta(3), gamma(1), delta(1), epsilon(1). CF(0) has four main subunits: a(1), b(1), b'(1) and c(9-12).

It is found in the plastid. It localises to the chloroplast thylakoid membrane. The catalysed reaction is ATP + H2O + 4 H(+)(in) = ADP + phosphate + 5 H(+)(out). In terms of biological role, produces ATP from ADP in the presence of a proton gradient across the membrane. The catalytic sites are hosted primarily by the beta subunits. This is ATP synthase subunit beta, chloroplastic from Phaeodactylum tricornutum (strain CCAP 1055/1).